A 145-amino-acid polypeptide reads, in one-letter code: UPF0179 protein MmarC6_0993 (145 aa).

Belongs to the UPF0179 family.

The polypeptide is UPF0179 protein MmarC6_0993 (Methanococcus maripaludis (strain C6 / ATCC BAA-1332)).